Reading from the N-terminus, the 549-residue chain is Glucose-6-phosphate isomerase (549 aa).

Residue Glu-355 is the Proton donor of the active site. Catalysis depends on residues His-387 and Lys-515.

This sequence belongs to the GPI family.

The protein localises to the cytoplasm. It carries out the reaction alpha-D-glucose 6-phosphate = beta-D-fructose 6-phosphate. It participates in carbohydrate biosynthesis; gluconeogenesis. The protein operates within carbohydrate degradation; glycolysis; D-glyceraldehyde 3-phosphate and glycerone phosphate from D-glucose: step 2/4. In terms of biological role, catalyzes the reversible isomerization of glucose-6-phosphate to fructose-6-phosphate. This chain is Glucose-6-phosphate isomerase, found in Mannheimia succiniciproducens (strain KCTC 0769BP / MBEL55E).